Reading from the N-terminus, the 432-residue chain is Phosphoribosylamine--glycine ligase (432 aa).

Residues 110–316 (RNFMKDNDIE…MIDVMSAVVN (207 aa)) enclose the ATP-grasp domain. An ATP-binding site is contributed by 137 to 194 (IEELGSVAIKPAGLTGGKGVKVMGDQLPDTGAAYDYAVSLLDGDNVVVEENLVGEEFT). Residues Gln274, Glu286, and Asn288 each contribute to the Mg(2+) site. Mn(2+)-binding residues include Gln274, Glu286, and Asn288.

The protein belongs to the GARS family. Requires Mg(2+) as cofactor. Mn(2+) serves as cofactor.

It carries out the reaction 5-phospho-beta-D-ribosylamine + glycine + ATP = N(1)-(5-phospho-beta-D-ribosyl)glycinamide + ADP + phosphate + H(+). It participates in purine metabolism; IMP biosynthesis via de novo pathway; N(1)-(5-phospho-D-ribosyl)glycinamide from 5-phospho-alpha-D-ribose 1-diphosphate: step 2/2. The protein is Phosphoribosylamine--glycine ligase of Methanococcoides burtonii (strain DSM 6242 / NBRC 107633 / OCM 468 / ACE-M).